Here is a 267-residue protein sequence, read N- to C-terminus: Apolipoprotein A-I (267 aa).

Positions 1–18 (MKAAVLTLAVLFLTGSQA) are cleaved as a signal peptide. 2 repeat units span residues 68 to 89 (LKLL…EDLG) and 90 to 111 (PVTQ…QEMS). Residues 68–267 (LKLLDNWDSL…EEYAKKLSSQ (200 aa)) are 10 X approximate tandem repeats. Methionine sulfoxide is present on methionine 110. The stretch at 112–122 (KDLEEVKAKVQ) is one 3; half-length repeat. A run of 5 repeats spans residues 123-144 (PYLD…QKLE), 145-166 (PLRT…EKLS), 167-188 (PLAE…TQLA), 189-210 (PYSD…ESGG), and 211-232 (ASLA…EKAK). A 9; half-length repeat occupies 233–243 (PALEDLRQGLL). Residues 244 to 267 (PVLESFKVSFLSALEEYAKKLSSQ) form repeat 10.

It belongs to the apolipoprotein A1/A4/E family. Homodimer. Interacts with APOA1BP and CLU. Component of a sperm activating protein complex (SPAP), consisting of APOA1, an immunoglobulin heavy chain, an immunoglobulin light chain and albumin. Interacts with NDRG1. Interacts with SCGB3A2. Interacts with NAXE and YJEFN3. Post-translationally, glycosylated. In terms of processing, palmitoylated. Phosphorylation sites are present in the extracellular medium.

Its subcellular location is the secreted. Its function is as follows. Participates in the reverse transport of cholesterol from tissues to the liver for excretion by promoting cholesterol efflux from tissues and by acting as a cofactor for the lecithin cholesterol acyltransferase (LCAT). As part of the SPAP complex, activates spermatozoa motility. This is Apolipoprotein A-I (APOA1) from Cebus imitator (Panamanian white-faced capuchin).